The sequence spans 125 residues: Cu-Zn superoxide dismutase-like protein (125 aa).

Residues Cys52 and Cys102 are joined by a disulfide bond.

This sequence belongs to the Cu-Zn superoxide dismutase family.

The protein resides in the host cytoplasm. Functionally, virion protein with no enzymatic activity. This is Cu-Zn superoxide dismutase-like protein from Mus musculus (Mouse).